The sequence spans 128 residues: NADH-ubiquinone oxidoreductase chain 3 (128 aa).

The next 3 helical transmembrane spans lie at 3–23 (TIYTYLAPIVAMVLVVLNYLI), 52–72 (VAFILVAILFLPFDLEMSSIL), and 84–104 (YGLSILVIFLLSLVIAFVYEI).

This sequence belongs to the complex I subunit 3 family.

It is found in the mitochondrion membrane. It carries out the reaction a ubiquinone + NADH + 5 H(+)(in) = a ubiquinol + NAD(+) + 4 H(+)(out). Core subunit of the mitochondrial membrane respiratory chain NADH dehydrogenase (Complex I) that is believed to belong to the minimal assembly required for catalysis. Complex I functions in the transfer of electrons from NADH to the respiratory chain. The immediate electron acceptor for the enzyme is believed to be ubiquinone. This Debaryomyces hansenii (strain ATCC 36239 / CBS 767 / BCRC 21394 / JCM 1990 / NBRC 0083 / IGC 2968) (Yeast) protein is NADH-ubiquinone oxidoreductase chain 3 (ND3).